The primary structure comprises 360 residues: Histidinol-phosphate aminotransferase (360 aa).

Lys-223 carries the N6-(pyridoxal phosphate)lysine modification.

The protein belongs to the class-II pyridoxal-phosphate-dependent aminotransferase family. Histidinol-phosphate aminotransferase subfamily. In terms of assembly, homodimer. It depends on pyridoxal 5'-phosphate as a cofactor.

The enzyme catalyses L-histidinol phosphate + 2-oxoglutarate = 3-(imidazol-4-yl)-2-oxopropyl phosphate + L-glutamate. It functions in the pathway amino-acid biosynthesis; L-histidine biosynthesis; L-histidine from 5-phospho-alpha-D-ribose 1-diphosphate: step 7/9. The protein is Histidinol-phosphate aminotransferase (hisC) of Bacillus subtilis (strain 168).